Reading from the N-terminus, the 326-residue chain is ATP synthase gamma chain (326 aa).

It belongs to the ATPase gamma chain family. As to quaternary structure, F-type ATPases have 2 components, CF(1) - the catalytic core - and CF(0) - the membrane proton channel. CF(1) has five subunits: alpha(3), beta(3), gamma(1), delta(1), epsilon(1). CF(0) has three main subunits: a, b and c.

It is found in the cell membrane. In terms of biological role, produces ATP from ADP in the presence of a proton gradient across the membrane. The gamma chain is believed to be important in regulating ATPase activity and the flow of protons through the CF(0) complex. The chain is ATP synthase gamma chain from Rhodococcus jostii (strain RHA1).